The following is a 486-amino-acid chain: Palmitoyltransferase pfa4 (486 aa).

Residues 1 to 15 (MTNLQTGPTTRGLQR) lie on the Cytoplasmic side of the membrane. The chain crosses the membrane as a helical span at residues 16-36 (FAIPAVCGLIIFLGYYSQYLF). Residues 37 to 51 (NTSADLAPGPLTCRE) lie on the Lumenal side of the membrane. A helical transmembrane segment spans residues 52–72 (SLIFNILLVCLWLTYYQACTV). The Cytoplasmic segment spans residues 73–146 (DPGQYKFPPK…NCVSLQTFPH (74 aa)). Positions 81 to 91 (PKEKEDGDNNN) are enriched in basic and acidic residues. A disordered region spans residues 81–101 (PKEKEDGDNNNKRGGRGPQKA). Residues 102–152 (KWCKKCDAPKPPRAHHCRHCARCIPRMDHHCPWTGNCVSLQTFPHFLRFLV) form the DHHC domain. Cysteine 132 functions as the S-palmitoyl cysteine intermediate in the catalytic mechanism. The helical transmembrane segment at 147 to 166 (FLRFLVYTNAALVYFARLLW) threads the bilayer. The Lumenal portion of the chain corresponds to 167-178 (TRLYYGLWDQRH). Residues 179–201 (VPAYLGPSVGALLGCTMLSIAWF) form a helical membrane-spanning segment. Residues 202–486 (ATQFALMVLL…RKVKSNGVHE (285 aa)) lie on the Cytoplasmic side of the membrane. Residues 314–420 (NDRVGMWPPP…QDGRAWMNSE (107 aa)) form a disordered region. Basic and acidic residues-rich tracts occupy residues 324 to 333 (DPEKLRRERA) and 346 to 376 (LNTE…DLRR). Over residues 386–399 (EEDEIMAELEEDEG) the composition is skewed to acidic residues.

This sequence belongs to the DHHC palmitoyltransferase family. PFA4 subfamily.

The protein localises to the endoplasmic reticulum membrane. The catalysed reaction is L-cysteinyl-[protein] + hexadecanoyl-CoA = S-hexadecanoyl-L-cysteinyl-[protein] + CoA. In terms of biological role, mediates the reversible addition of palmitate to target proteins, thereby regulating their membrane association and biological function. This Neurospora crassa (strain ATCC 24698 / 74-OR23-1A / CBS 708.71 / DSM 1257 / FGSC 987) protein is Palmitoyltransferase pfa4.